The chain runs to 770 residues: DEAD-box ATP-dependent RNA helicase 24 (770 aa).

A disordered region spans residues 1-106; sequence MSKRPKLGGF…ADSDDEDDPV (106 aa). Residues 14–26 show a composition bias toward polar residues; that stretch reads RPTSYSFERSQPP. Residues 34–43 show a composition bias toward acidic residues; sequence DDPDLDDIAF. A compositionally biased stretch (low complexity) spans 44–55; the sequence is SDDAAAPSDAPP. The Q motif signature appears at 219–247; sequence KSFADCGFPVQLMNAIAKQGYEKPTTIQC. One can recognise a Helicase ATP-binding domain in the interval 250 to 425; the sequence is LPIVLSGRDI…REILTDPIRV (176 aa). 263–270 contributes to the ATP binding site; it reads AKTGSGKT. A DEAD box motif is present at residues 373–376; the sequence is DEAD. Positions 436–599 constitute a Helicase C-terminal domain; sequence DIKQVVNVLP…DVPNELMDLA (164 aa). Basic and acidic residues predominate over residues 604–613; it reads RFRANRDSRK. 3 disordered regions span residues 604 to 640, 683 to 704, and 729 to 770; these read RFRA…RGRG, VSAS…PSSF, and LPAP…GWDR. Over residues 621-635 the composition is skewed to gly residues; sequence GKGGGGGGGGGSGAR. Over residues 683 to 697 the composition is skewed to low complexity; that stretch reads VSASSSNTPSNSAPS. Polar residues predominate over residues 744–753; sequence TVENANPNPE. The span at 754–770 shows a compositional bias: basic and acidic residues; the sequence is SSRDRTRERKRPSGWDR.

This sequence belongs to the DEAD box helicase family.

The catalysed reaction is ATP + H2O = ADP + phosphate + H(+). In Oryza sativa subsp. japonica (Rice), this protein is DEAD-box ATP-dependent RNA helicase 24.